The primary structure comprises 164 residues: Lipoprotein signal peptidase (164 aa).

A run of 4 helical transmembrane segments spans residues 6–26, 39–59, 65–85, and 88–108; these read LGIL…LWLL, VTSF…GWFA, GQIL…IWMA, and TTKL…GNAI. Residues aspartate 118 and aspartate 140 contribute to the active site. The chain crosses the membrane as a helical span at residues 141-161; it reads VAIVVGVVALLYDSLIGAPAV.

This sequence belongs to the peptidase A8 family.

Its subcellular location is the cell inner membrane. The catalysed reaction is Release of signal peptides from bacterial membrane prolipoproteins. Hydrolyzes -Xaa-Yaa-Zaa-|-(S,diacylglyceryl)Cys-, in which Xaa is hydrophobic (preferably Leu), and Yaa (Ala or Ser) and Zaa (Gly or Ala) have small, neutral side chains.. Its pathway is protein modification; lipoprotein biosynthesis (signal peptide cleavage). In terms of biological role, this protein specifically catalyzes the removal of signal peptides from prolipoproteins. The polypeptide is Lipoprotein signal peptidase (Rhodopseudomonas palustris (strain TIE-1)).